Here is an 89-residue protein sequence, read N- to C-terminus: Small ribosomal subunit protein uS17 (89 aa).

The protein belongs to the universal ribosomal protein uS17 family. As to quaternary structure, part of the 30S ribosomal subunit.

In terms of biological role, one of the primary rRNA binding proteins, it binds specifically to the 5'-end of 16S ribosomal RNA. The chain is Small ribosomal subunit protein uS17 from Coxiella burnetii (strain Dugway 5J108-111).